An 80-amino-acid chain; its full sequence is Raniseptin-7 (80 aa).

An N-terminal signal peptide occupies residues 1–22 (MAFLKKSLFLVLFLGIVSLSIC). Positions 23-49 (EEEKREGEEEEKQEEENEELSEEELRE) are excised as a propeptide. The disordered stretch occupies residues 27–46 (REGEEEEKQEEENEELSEEE). Residues 30–44 (EEEEKQEEENEELSE) show a composition bias toward acidic residues.

The protein belongs to the frog skin active peptide (FSAP) family. Dermaseptin subfamily. In terms of tissue distribution, expressed by the skin glands.

It is found in the secreted. Has antibacterial activity. This Boana raniceps (Chaco tree frog) protein is Raniseptin-7.